A 505-amino-acid chain; its full sequence is Protein ERGIC-53-like (505 aa).

The first 25 residues, 1 to 25, serve as a signal peptide directing secretion; the sequence is MLEIRGLSPSLCLLSLLLVLHGAER. The Lumenal segment spans residues 26–438; that stretch reads SQPPPRRRFE…SGWLLGSSTC (413 aa). The L-type lectin-like domain maps to 32–254; the sequence is RRFEYKLSFK…DVLSFLTFSL (223 aa). Asn84 carries N-linked (GlcNAc...) asparagine glycosylation. Cysteines 177 and 216 form a disulfide. The helical transmembrane segment at 439–459 threads the bilayer; that stretch reads LHTSIFLFFLLLQTVGFFCYV. Topologically, residues 460–505 are cytoplasmic; the sequence is NFSRQELDKRLQEYLSTGSLSLEPALPITRTIGVLRRQPISPSMQA.

It is found in the endoplasmic reticulum-Golgi intermediate compartment membrane. This chain is Protein ERGIC-53-like (Lman1l), found in Mus musculus (Mouse).